Here is a 594-residue protein sequence, read N- to C-terminus: DEAD-box ATP-dependent RNA helicase 25 (594 aa).

2 disordered regions span residues 56–80 and 92–121; these read RSGG…EEGL and GVRE…VDGS. Residues 126-154 carry the Q motif motif; it reads TRFDQCTISPLSLKAVKDAGYERMTQVQE. The region spanning 157-340 is the Helicase ATP-binding domain; that stretch reads LPVILQGKDV…HIAMKKNYKF (184 aa). 170–177 contacts ATP; it reads AKTGTGKT. The DEAD box motif lies at 288 to 291; it reads DEAD. One can recognise a Helicase C-terminal domain in the interval 370-520; sequence ILYDVLKKHV…SVDSSTQTIV (151 aa).

Belongs to the DEAD box helicase family.

The enzyme catalyses ATP + H2O = ADP + phosphate + H(+). The protein is DEAD-box ATP-dependent RNA helicase 25 of Oryza sativa subsp. japonica (Rice).